The sequence spans 262 residues: Acyl-[acyl-carrier-protein]--UDP-N-acetylglucosamine O-acyltransferase (262 aa).

Belongs to the transferase hexapeptide repeat family. LpxA subfamily. In terms of assembly, homotrimer.

The protein resides in the cytoplasm. It carries out the reaction a (3R)-hydroxyacyl-[ACP] + UDP-N-acetyl-alpha-D-glucosamine = a UDP-3-O-[(3R)-3-hydroxyacyl]-N-acetyl-alpha-D-glucosamine + holo-[ACP]. Its pathway is glycolipid biosynthesis; lipid IV(A) biosynthesis; lipid IV(A) from (3R)-3-hydroxytetradecanoyl-[acyl-carrier-protein] and UDP-N-acetyl-alpha-D-glucosamine: step 1/6. Its function is as follows. Involved in the biosynthesis of lipid A, a phosphorylated glycolipid that anchors the lipopolysaccharide to the outer membrane of the cell. In Burkholderia ambifaria (strain ATCC BAA-244 / DSM 16087 / CCUG 44356 / LMG 19182 / AMMD) (Burkholderia cepacia (strain AMMD)), this protein is Acyl-[acyl-carrier-protein]--UDP-N-acetylglucosamine O-acyltransferase.